Consider the following 1017-residue polypeptide: Ubiquitin-like modifier-activating enzyme 1 (1017 aa).

Repeat copies occupy residues 26-163 (SHET…GQLF) and 419-571 (GKTL…QVVV). The tract at residues 26–571 (SHETMKKITS…GTKGNTQVVV (546 aa)) is 2 approximate repeats. Residues alanine 438, aspartate 464, arginine 475, lysine 488, and 536–537 (DN) contribute to the ATP site. Cysteine 592 functions as the Glycyl thioester intermediate in the catalytic mechanism. Residues 765-781 (IQTSENEPAPSSNTQQA) show a composition bias toward polar residues. The segment at 765 to 788 (IQTSENEPAPSSNTQQAGGDAEDD) is disordered.

It belongs to the ubiquitin-activating E1 family. As to quaternary structure, monomer.

It catalyses the reaction ATP + ubiquitin + [E1 ubiquitin-activating enzyme]-L-cysteine = AMP + diphosphate + S-ubiquitinyl-[E1 ubiquitin-activating enzyme]-L-cysteine.. Its pathway is protein modification; protein ubiquitination. Catalyzes the first step in ubiquitin conjugation to mark cellular proteins for degradation through the ubiquitin-proteasome system. Activates ubiquitin by first adenylating its C-terminal glycine residue with ATP, and thereafter linking this residue to the side chain of a cysteine residue in E1, yielding a ubiquitin-E1 thioester and free AMP. This Dictyostelium discoideum (Social amoeba) protein is Ubiquitin-like modifier-activating enzyme 1 (uba1).